The sequence spans 581 residues: Guanine nucleotide-binding protein-like 3 homolog (581 aa).

The segment covering 1 to 49 (MALKRLKTKKSKRLTGRLKHKIEKKVRDHNKKERRAAKKNPKKGSKKQK) has biased composition (basic residues). The tract at residues 1-50 (MALKRLKTKKSKRLTGRLKHKIEKKVRDHNKKERRAAKKNPKKGSKKQKL) is disordered. Residues 64–108 (LKEVEEAKQRQEAERLARREAFKAEREQNKFKTLESMVEDADMRS) are a coiled coil. At Ser-99 the chain carries Phosphoserine. Positions 141–325 (FKEFRKVIEN…LIDCPGIVFT (185 aa)) constitute a CP-type G domain. Residues 189–192 (NKAD), 274–281 (GIPNVGKS), and 318–321 (DCPG) contribute to the GTP site. The segment covering 500-517 (KPAKGRKRKLDEEKEKVD) has biased composition (basic and acidic residues). Residues 500 to 519 (KPAKGRKRKLDEEKEKVDPS) are disordered.

This sequence belongs to the TRAFAC class YlqF/YawG GTPase family.

It localises to the nucleus. It is found in the nucleolus. Its function is as follows. May play a role in regulating cellular proliferation. The protein is Guanine nucleotide-binding protein-like 3 homolog (Ns1) of Drosophila melanogaster (Fruit fly).